The primary structure comprises 119 residues: MAGSATIVAGLLLLVACACCIFPIDSVTIPSSCCTSFISKKIPENRVVSYQLANGSICPKAGVIFITKKGHKICTDPKLLWVQRHIQKLDAKKNQPSKGAKAVRTKFAVQRRRGNSTEV.

The N-terminal stretch at 1-26 (MAGSATIVAGLLLLVACACCIFPIDS) is a signal peptide. Disulfide bonds link Cys-33–Cys-58 and Cys-34–Cys-74. 2 N-linked (GlcNAc...) asparagine glycosylation sites follow: Asn-54 and Asn-115. A disordered region spans residues 96 to 119 (PSKGAKAVRTKFAVQRRRGNSTEV). The span at 101-119 (KAVRTKFAVQRRRGNSTEV) shows a compositional bias: basic residues.

Belongs to the intercrine beta (chemokine CC) family. In terms of tissue distribution, highest expression in jejunum and spleen. Lower levels found in liver and lung. No expression detected in kidney, thymus, brain or testis.

The protein resides in the secreted. In terms of biological role, chemotactic for resting T-lymphocytes, and eosinophils. Has lower chemotactic activity for neutrophils but none for monocytes and activated lymphocytes. Is a strong suppressor of colony formation by a multipotential hematopoietic progenitor cell line. Binds to CCR3. In Mus musculus (Mouse), this protein is C-C motif chemokine 24.